A 407-amino-acid polypeptide reads, in one-letter code: Arginine deiminase (407 aa).

The Amidino-cysteine intermediate role is filled by cysteine 397.

It belongs to the arginine deiminase family.

Its subcellular location is the cytoplasm. The catalysed reaction is L-arginine + H2O = L-citrulline + NH4(+). It functions in the pathway amino-acid degradation; L-arginine degradation via ADI pathway; carbamoyl phosphate from L-arginine: step 1/2. The sequence is that of Arginine deiminase (arcA) from Escherichia coli O6:H1 (strain CFT073 / ATCC 700928 / UPEC).